A 338-amino-acid chain; its full sequence is 1-aminocyclopropane-1-carboxylate deaminase (338 aa).

Lys-51 is subject to N6-(pyridoxal phosphate)lysine. The active-site Nucleophile is Ser-78.

The protein belongs to the ACC deaminase/D-cysteine desulfhydrase family. Homotrimer. It depends on pyridoxal 5'-phosphate as a cofactor.

The enzyme catalyses 1-aminocyclopropane-1-carboxylate + H2O = 2-oxobutanoate + NH4(+). Its function is as follows. Catalyzes a cyclopropane ring-opening reaction, the irreversible conversion of 1-aminocyclopropane-1-carboxylate (ACC) to ammonia and alpha-ketobutyrate. Allows growth on ACC as a nitrogen source. This chain is 1-aminocyclopropane-1-carboxylate deaminase, found in Burkholderia vietnamiensis (strain G4 / LMG 22486) (Burkholderia cepacia (strain R1808)).